A 620-amino-acid chain; its full sequence is MKRDVRILLLGEAQVGKTSLILSLVGEEFPEEVPPRAEEITIPADVTPEKVPTHIVDYSEAEQTAEELQDEIQKASVVCVVYDVSEETTVEKIRTKWIPLVNGGTRRGPRVPIILVGNKSDLRPGGSMEAVLPIMSQFPEIETCVECSAKNLKNISELFYYAQKAVLHPTAPLYDPEAKQLRPACAQALTRIFRLSDQDMDQALSDQELNAFQTCCFGHPLAPQALEDVKLVVSRNVAGGVQDDRLTLDGFLFLNTLFIQRGRHETTWTILRRFGYSDSLELTPDYLFPALHVPPGCSAELNHHGYQFAQRMLEKHDQDRDGALSPAELESLFSVFPGPPWGPQLPRHRPHRGRSAAPARVPLPVDPGDLLGRPALSRAPWLPGLPHPLRAGLAGARHHSHQGEEAGPGKGQTQRNVLLCKVLGARGVGKSSFLRAFLGRGLGDARGPPEEPSVYAIDTVRVGGQEKYLILCEVAADSLLTAEADASCDVACLMFDSSDPGSFALCASVYKRHYMDGQIPCLFISSKADLPEGLSPPGLSPSEFCRRHRLPAPTLFSCAGPAEPSTAVFARLATMATFPHLVHGELHTTSFWLRVALGAVGAAVAAILSFSLYRVLVKSR.

Residues 1 to 594 lie on the Cytoplasmic side of the membrane; the sequence is MKRDVRILLL…ELHTTSFWLR (594 aa). One can recognise a Miro 1 domain in the interval 2–168; it reads KRDVRILLLG…FYYAQKAVLH (167 aa). Residues Gly-16, Lys-17, Thr-18, and Ser-19 each contribute to the GTP site. Thr-18 provides a ligand contact to Mg(2+). Residues Pro-35 and Asp-57 each coordinate Mg(2+). Ser-59 lines the GTP pocket. Residue Lys-96 forms a Glycyl lysine isopeptide (Lys-Gly) (interchain with G-Cter in ubiquitin) linkage. Asn-118, Lys-119, Asp-121, Ala-149, and Lys-150 together coordinate GTP. Lys-119 is covalently cross-linked (Glycyl lysine isopeptide (Lys-Gly) (interchain with G-Cter in ubiquitin)). Residue Lys-164 forms a Glycyl lysine isopeptide (Lys-Gly) (interchain with G-Cter in ubiquitin) linkage. EF-hand domains are found at residues 184 to 219 and 304 to 339; these read ACAQALTRIFRLSDQDMDQALSDQELNAFQTCCFGH and HGYQFAQRMLEKHDQDRDGALSPAELESLFSVFPGP. Ca(2+)-binding residues include Asp-197, Asp-199, Asp-201, Glu-208, Asp-317, Asp-319, Asp-321, and Glu-328. Positions 340-364 are disordered; the sequence is PWGPQLPRHRPHRGRSAAPARVPLP. The 164-residue stretch at 415–578 folds into the Miro 2 domain; that stretch reads RNVLLCKVLG…FARLATMATF (164 aa). Residues Gly-427, Gly-429, Lys-430, and Ser-431 each contribute to the GTP site. Residues Ser-431 and Glu-473 each contribute to the Mg(2+) site. GTP contacts are provided by Lys-527, Asp-529, and Cys-558. A helical; Anchor for type IV membrane protein transmembrane segment spans residues 595–617; it reads VALGAVGAAVAAILSFSLYRVLV. At 618 to 620 the chain is on the mitochondrial intermembrane side; it reads KSR.

This sequence belongs to the mitochondrial Rho GTPase family. In terms of assembly, homodimer. Interacts with the kinesin-binding proteins TRAK1/OIP106 and TRAK2/GRIF1, forming a link between mitochondria and the trafficking apparatus of the microtubules. Interacts with ARMCX3. Found in a complex with KIF5B, OGT, RHOT1 and TRAK1. Post-translationally, ubiquitinated by PRKN in a PINK1-dependent manner, leading to its degradation.

It localises to the mitochondrion outer membrane. It catalyses the reaction GTP + H2O = GDP + phosphate + H(+). The catalysed reaction is ATP + H2O = ADP + phosphate + H(+). The enzyme catalyses UTP + H2O = UDP + phosphate + H(+). Functionally, atypical mitochondrial nucleoside-triphosphatase (NTPase) involved in mitochondrial trafficking. Probably involved in control of anterograde transport of mitochondria and their subcellular distribution. Can hydrolyze GTP, ATP and UTP. In Sus scrofa (Pig), this protein is Mitochondrial Rho GTPase 2 (RHOT2).